The chain runs to 360 residues: Hydroxyproline O-arabinosyltransferase RDN2 (360 aa).

Residues 13–33 traverse the membrane as a helical; Signal-anchor segment; the sequence is VLGSSFATYNLVTMIIHYGSA.

It is found in the golgi apparatus membrane. It catalyses the reaction trans-4-hydroxy-L-prolyl-[protein] + UDP-beta-L-arabinofuranose = O-(beta-L-arabinofuranosyl)-trans-4-hydroxy-L-prolyl-[protein] + UDP + H(+). Glycosyltransferase involved in the O-arabinosylation of several proteins including extensins and small signaling peptides. Catalyzes the transfer of the initial L-arabinose to the hydroxyl group of Hyp residues. Probably involved in the arabinosylation of CLAVATA3/ESR-related (CLE) signaling peptides that move from root to shoot, to interact with SUNN receptor kinase signaling that regulates nodulation. Involved in long distance nodulation signaling events. Involved in the autoregulation of nodulation (AON), a long distance systemic signaling from root to shoot and back again, which allows legumes to limit the number of root nodules formed based on available nitrogen and previous rhizobial colonization. Functions in the root, upstream of the shoot receptor kinase SUNN and via CLE peptide, to control AON. The chain is Hydroxyproline O-arabinosyltransferase RDN2 from Medicago truncatula (Barrel medic).